Here is a 309-residue protein sequence, read N- to C-terminus: MNHPRKDLLNISSLTDEEIHTLLDSAGPMKELFTKSVKKVPALKGKSVLTLFYEPSTRTRSSFEVAAERLSADVTNFTVSTSSVVKGESVQDTIATLQAMKVDYVIVRHYNSGLPNVIARHTCASVVNAGDGAHAHPSQALLDSFTIREVFPDVRGKRVLIVGDILHSRVARSTSLLMKRLGMEVAFLGPGSLVPRTEHSGIPRFSDFNEAFAWKPDVIYLLRVQKERQDAPFFPSAREYNKIYGVTEERLKRISGEGLYIMHPGPVNRGVEICDLAMDYERCLINRQVENGIACRMSILYHLTPQTQH.

Carbamoyl phosphate contacts are provided by Arg-58 and Thr-59. Lys-86 contributes to the L-aspartate binding site. Carbamoyl phosphate contacts are provided by Arg-108, His-136, and Gln-139. L-aspartate-binding residues include Arg-169 and Arg-223. Carbamoyl phosphate-binding residues include Gly-265 and Pro-266.

The protein belongs to the aspartate/ornithine carbamoyltransferase superfamily. ATCase family. As to quaternary structure, heterododecamer (2C3:3R2) of six catalytic PyrB chains organized as two trimers (C3), and six regulatory PyrI chains organized as three dimers (R2).

It catalyses the reaction carbamoyl phosphate + L-aspartate = N-carbamoyl-L-aspartate + phosphate + H(+). It participates in pyrimidine metabolism; UMP biosynthesis via de novo pathway; (S)-dihydroorotate from bicarbonate: step 2/3. Functionally, catalyzes the condensation of carbamoyl phosphate and aspartate to form carbamoyl aspartate and inorganic phosphate, the committed step in the de novo pyrimidine nucleotide biosynthesis pathway. This chain is Aspartate carbamoyltransferase catalytic subunit, found in Akkermansia muciniphila (strain ATCC BAA-835 / DSM 22959 / JCM 33894 / BCRC 81048 / CCUG 64013 / CIP 107961 / Muc).